The sequence spans 81 residues: Small ribosomal subunit protein bS16 (81 aa).

Belongs to the bacterial ribosomal protein bS16 family.

The protein is Small ribosomal subunit protein bS16 of Clostridium perfringens (strain ATCC 13124 / DSM 756 / JCM 1290 / NCIMB 6125 / NCTC 8237 / Type A).